We begin with the raw amino-acid sequence, 575 residues long: Protein AUXIN SIGNALING F-BOX 2 (575 aa).

The F-box domain occupies 1–47; it reads MNYFPDEVIEHVFDFVTSHKDRNAISLVCKSWYKIERYSRQKVFIGN. 1D-myo-inositol hexakisphosphate is bound at residue K69. The interaction with auxin-responsive proteins stretch occupies residues 76–77; sequence DF. 1D-myo-inositol hexakisphosphate-binding positions include 108 to 109 and R340; that span reads KR. The tract at residues 343 to 348 is interaction with auxin-responsive proteins; the sequence is PSDLLG. 396 to 398 is a 1D-myo-inositol hexakisphosphate binding site; that stretch reads RFR. The interaction with auxin-responsive proteins stretch occupies residues 400-404; the sequence is CILEP. R431 contributes to the 1D-myo-inositol hexakisphosphate binding site. An interaction with auxin-responsive proteins region spans residues 459-460; it reads AF. 1D-myo-inositol hexakisphosphate-binding positions include 479–480 and R504; that span reads KK.

As to quaternary structure, part of a SCF (SKP1-cullin-F-box) protein ligase complex. Interacts with Aux/IAA proteins (IAA7) in an auxin-dependent manner. In terms of tissue distribution, ubiquitous, with higher levels in seedlings.

The protein localises to the nucleus. It functions in the pathway protein modification; protein ubiquitination. Component of SCF(ASK-cullin-F-box) E3 ubiquitin ligase complexes, which may mediate the ubiquitination and subsequent proteasomal degradation of target proteins. Confers sensitivity to the virulent bacterial pathogen P.syringae. Auxin receptor that mediates Aux/IAA proteins proteasomal degradation and auxin-regulated transcription. Involved in embryogenesis regulation by auxin. In Arabidopsis thaliana (Mouse-ear cress), this protein is Protein AUXIN SIGNALING F-BOX 2 (AFB2).